Here is an 833-residue protein sequence, read N- to C-terminus: Kinesin-like protein KIFC3 (833 aa).

Positions leucine 19–arginine 74 are disordered. The segment covering proline 30–proline 48 has biased composition (low complexity). 2 coiled-coil regions span residues leucine 102–alanine 362 and leucine 395–arginine 432. A Kinesin motor domain is found at asparagine 445–valine 768. Glycine 528–threonine 535 is an ATP binding site. The tract at residues glutamate 786–valine 833 is disordered. A compositionally biased stretch (polar residues) spans alanine 806–proline 815. Phosphoserine is present on residues serine 813 and serine 817.

This sequence belongs to the TRAFAC class myosin-kinesin ATPase superfamily. Kinesin family.

Its subcellular location is the cell junction. It localises to the adherens junction. The protein resides in the cytoplasm. The protein localises to the cytoskeleton. It is found in the microtubule organizing center. Its subcellular location is the centrosome. It localises to the cytoplasmic vesicle membrane. Its function is as follows. Minus-end microtubule-dependent motor protein. Involved in apically targeted transport. Required for zonula adherens maintenance. The sequence is that of Kinesin-like protein KIFC3 (KIFC3) from Homo sapiens (Human).